Here is a 392-residue protein sequence, read N- to C-terminus: O-phospho-L-seryl-tRNA:Cys-tRNA synthase (392 aa).

Residues 85–86 (AR), Asn190, and 213–215 (SGH) each bind pyridoxal 5'-phosphate. Position 216 is an N6-(pyridoxal phosphate)lysine (Lys216).

It belongs to the SepCysS family. As to quaternary structure, homodimer. Interacts with SepRS. It depends on pyridoxal 5'-phosphate as a cofactor.

The enzyme catalyses O-phospho-L-seryl-tRNA(Cys) + hydrogen sulfide + H(+) = L-cysteinyl-tRNA(Cys) + phosphate. Functionally, converts O-phospho-L-seryl-tRNA(Cys) (Sep-tRNA(Cys)) to L-cysteinyl-tRNA(Cys) (Cys-tRNA(Cys)). The chain is O-phospho-L-seryl-tRNA:Cys-tRNA synthase from Methanoculleus marisnigri (strain ATCC 35101 / DSM 1498 / JR1).